A 348-amino-acid polypeptide reads, in one-letter code: Probable purine nucleoside permease C285.05 (348 aa).

The first 21 residues, 1–21, serve as a signal peptide directing secretion; the sequence is MLFLKLVASVLALMTIVPAQA.

This sequence belongs to the NUP family.

The protein localises to the endoplasmic reticulum. Its function is as follows. Probable nucleoside permease that transports adenosine and guanosine. The chain is Probable purine nucleoside permease C285.05 from Schizosaccharomyces pombe (strain 972 / ATCC 24843) (Fission yeast).